A 219-amino-acid polypeptide reads, in one-letter code: N-(5'-phosphoribosyl)anthranilate isomerase (219 aa).

It belongs to the TrpF family.

It catalyses the reaction N-(5-phospho-beta-D-ribosyl)anthranilate = 1-(2-carboxyphenylamino)-1-deoxy-D-ribulose 5-phosphate. It participates in amino-acid biosynthesis; L-tryptophan biosynthesis; L-tryptophan from chorismate: step 3/5. This chain is N-(5'-phosphoribosyl)anthranilate isomerase, found in Bradyrhizobium sp. (strain BTAi1 / ATCC BAA-1182).